The following is a 180-amino-acid chain: Inner membrane-spanning protein YciB (180 aa).

A run of 5 helical transmembrane segments spans residues 22-42 (IYVA…LTWL), 50-70 (MTLI…VFHN), 76-96 (WKVT…QVVL), 121-141 (AAWA…AFWL), and 149-169 (FKVF…GIYI).

It belongs to the YciB family.

The protein localises to the cell inner membrane. Plays a role in cell envelope biogenesis, maintenance of cell envelope integrity and membrane homeostasis. This chain is Inner membrane-spanning protein YciB, found in Edwardsiella ictaluri (strain 93-146).